The sequence spans 549 residues: CTP synthase (549 aa).

Residues 1–267 (MAKFVFITGG…CREVLDVLNL (267 aa)) are amidoligase domain. Serine 13 contacts CTP. Serine 13 contacts UTP. ATP is bound by residues 14 to 19 (SIGKGI) and aspartate 71. Mg(2+) is bound by residues aspartate 71 and glutamate 141. Residues 148–150 (DIE), 188–193 (KTKPTQ), and lysine 224 contribute to the CTP site. UTP contacts are provided by residues 188-193 (KTKPTQ) and lysine 224. In terms of domain architecture, Glutamine amidotransferase type-1 spans 292 to 534 (KIALVGKYVQ…IEAAQQRLPD (243 aa)). Glycine 354 provides a ligand contact to L-glutamine. Cysteine 381 serves as the catalytic Nucleophile; for glutamine hydrolysis. Residues 382–385 (LGMQ), glutamate 405, and arginine 462 contribute to the L-glutamine site. Catalysis depends on residues histidine 507 and glutamate 509.

This sequence belongs to the CTP synthase family. In terms of assembly, homotetramer.

It carries out the reaction UTP + L-glutamine + ATP + H2O = CTP + L-glutamate + ADP + phosphate + 2 H(+). The enzyme catalyses L-glutamine + H2O = L-glutamate + NH4(+). It catalyses the reaction UTP + NH4(+) + ATP = CTP + ADP + phosphate + 2 H(+). Its pathway is pyrimidine metabolism; CTP biosynthesis via de novo pathway; CTP from UDP: step 2/2. Its activity is regulated as follows. Allosterically activated by GTP, when glutamine is the substrate; GTP has no effect on the reaction when ammonia is the substrate. The allosteric effector GTP functions by stabilizing the protein conformation that binds the tetrahedral intermediate(s) formed during glutamine hydrolysis. Inhibited by the product CTP, via allosteric rather than competitive inhibition. Functionally, catalyzes the ATP-dependent amination of UTP to CTP with either L-glutamine or ammonia as the source of nitrogen. Regulates intracellular CTP levels through interactions with the four ribonucleotide triphosphates. This is CTP synthase from Synechococcus sp. (strain CC9605).